A 388-amino-acid polypeptide reads, in one-letter code: Formate-dependent phosphoribosylglycinamide formyltransferase (388 aa).

N(1)-(5-phospho-beta-D-ribosyl)glycinamide is bound by residues 20-21 (EL) and E80. ATP contacts are provided by residues R112, K153, 158-163 (SSGKGQ), 193-196 (EEFI), and E201. Residues 117–306 (RLAFEKLGLR…EFEIHARAIL (190 aa)) enclose the ATP-grasp domain. Positions 265 and 277 each coordinate Mg(2+). N(1)-(5-phospho-beta-D-ribosyl)glycinamide-binding positions include D284, K352, and 359–360 (RR).

Belongs to the PurK/PurT family. As to quaternary structure, homodimer.

It carries out the reaction N(1)-(5-phospho-beta-D-ribosyl)glycinamide + formate + ATP = N(2)-formyl-N(1)-(5-phospho-beta-D-ribosyl)glycinamide + ADP + phosphate + H(+). Its pathway is purine metabolism; IMP biosynthesis via de novo pathway; N(2)-formyl-N(1)-(5-phospho-D-ribosyl)glycinamide from N(1)-(5-phospho-D-ribosyl)glycinamide (formate route): step 1/1. Involved in the de novo purine biosynthesis. Catalyzes the transfer of formate to 5-phospho-ribosyl-glycinamide (GAR), producing 5-phospho-ribosyl-N-formylglycinamide (FGAR). Formate is provided by PurU via hydrolysis of 10-formyl-tetrahydrofolate. This is Formate-dependent phosphoribosylglycinamide formyltransferase from Methanococcus maripaludis (strain C5 / ATCC BAA-1333).